The following is a 101-amino-acid chain: Protein E7 (101 aa).

The E7 terminal domain stretch occupies residues 1–44; the sequence is MIGKEVTLQDIVLELNELQPEVQPVDLFCEEELPSEQQETEEEL. The short motif at 27-31 is the LXCXE motif; interaction with host RB1 and TMEM173/STING element; it reads LFCEE. A zinc finger lies at 56–92; sequence CGCCKVKLRIFVNATQFAIRTFQNLLFEELQLLCPEC. Positions 74-82 match the Nuclear export signal motif; it reads IRTFQNLLF.

The protein belongs to the papillomaviridae E7 protein family. As to quaternary structure, homodimer. Homooligomer. Interacts with host RB1; this interaction induces dissociation of RB1-E2F1 complex thereby disrupting RB1 activity. Interacts with host EP300; this interaction represses EP300 transcriptional activity. Interacts with protein E2; this interaction inhibits E7 oncogenic activity. Interacts with host TMEM173/STING; this interaction impairs the ability of TMEM173/STING to sense cytosolic DNA and promote the production of type I interferon (IFN-alpha and IFN-beta). Post-translationally, highly phosphorylated.

It is found in the host cytoplasm. The protein localises to the host nucleus. In terms of biological role, plays a role in viral genome replication by driving entry of quiescent cells into the cell cycle. Stimulation of progression from G1 to S phase allows the virus to efficiently use the cellular DNA replicating machinery to achieve viral genome replication. E7 protein has both transforming and trans-activating activities. Induces the disassembly of the E2F1 transcription factor from RB1, with subsequent transcriptional activation of E2F1-regulated S-phase genes. Interferes with host histone deacetylation mediated by HDAC1 and HDAC2, leading to transcription activation. Also plays a role in the inhibition of both antiviral and antiproliferative functions of host interferon alpha. Interaction with host TMEM173/STING impairs the ability of TMEM173/STING to sense cytosolic DNA and promote the production of type I interferon (IFN-alpha and IFN-beta). This chain is Protein E7, found in Homo sapiens (Human).